Reading from the N-terminus, the 349-residue chain is MSRVKVAVLGATGSVGQRFIQLLDHHPFFEITHLCASENSAGKTYGEVMKTRWKISSDIPAYAKNLVITTPDPAKTKDVVLAFSGLDSNVAGEVEKNYANAGIHIISNSKNHRMDPTVPILSAEVNSSHLEVLTSQKTKGKIITNSNCTIMGVTISLKPLLDRFGIESVMLFSMQAISGAGYPGVPTMDILGNVIPHIGGEEEKAEIEPLKCLGKVENGKILHADFSISAHCNRVPVFDGHTVCVSVKFKKKPSREEIISSWKDFSGEPQTLGLPLAPNPVILFREEEDRPQPRLDLDTGKGMTTVIGRLRPDPILDWKYVVLSHNTIRGAAGAALLNAELLYKKKFLG.

NADP(+)-binding positions include 12 to 15 and 39 to 40; these read TGSV and NS. Residue R113 coordinates phosphate. The Acyl-thioester intermediate role is filled by C148. Q175 lines the substrate pocket. 178 to 179 provides a ligand contact to NADP(+); sequence SG. E201 is a binding site for substrate. K204 is a phosphate binding site. Residue R234 coordinates substrate. Residue H241 is the Proton acceptor of the active site. 326–327 serves as a coordination point for NADP(+); the sequence is NT.

The protein belongs to the aspartate-semialdehyde dehydrogenase family. In terms of assembly, homodimer.

The catalysed reaction is L-aspartate 4-semialdehyde + phosphate + NADP(+) = 4-phospho-L-aspartate + NADPH + H(+). Its pathway is amino-acid biosynthesis; L-lysine biosynthesis via DAP pathway; (S)-tetrahydrodipicolinate from L-aspartate: step 2/4. The protein operates within amino-acid biosynthesis; L-methionine biosynthesis via de novo pathway; L-homoserine from L-aspartate: step 2/3. It functions in the pathway amino-acid biosynthesis; L-threonine biosynthesis; L-threonine from L-aspartate: step 2/5. In terms of biological role, catalyzes the NADPH-dependent formation of L-aspartate-semialdehyde (L-ASA) by the reductive dephosphorylation of L-aspartyl-4-phosphate. In Leptospira interrogans serogroup Icterohaemorrhagiae serovar copenhageni (strain Fiocruz L1-130), this protein is Aspartate-semialdehyde dehydrogenase.